Here is a 390-residue protein sequence, read N- to C-terminus: Substance-K receptor (390 aa).

Residues M1–Q32 are Extracellular-facing. N19 is a glycosylation site (N-linked (GlcNAc...) asparagine). The helical transmembrane segment at L33–W56 threads the bilayer. Over I57–N69 the chain is Cytoplasmic. The helical transmembrane segment at Y70–N90 threads the bilayer. At F91–Y107 the chain is on the extracellular side. A disulfide bridge connects residues C106 and C181. A helical transmembrane segment spans residues F108–A129. Residues D130 to K149 are Cytoplasmic-facing. Residues A150 to S170 form a helical membrane-spanning segment. Over T171–L196 the chain is Extracellular. Residues Y197–S218 traverse the membrane as a helical segment. Residues V219–A251 lie on the Cytoplasmic side of the membrane. A helical transmembrane segment spans residues M252–L272. At G273 to L290 the chain is on the extracellular side. A helical membrane pass occupies residues A291–L310. The Cytoplasmic portion of the chain corresponds to N311–A390. A lipid anchor (S-palmitoyl cysteine) is attached at C324. Residues H365–A390 are disordered. Positions S366–S375 are enriched in polar residues.

Belongs to the G-protein coupled receptor 1 family.

The protein localises to the cell membrane. In terms of biological role, this is a receptor for the tachykinin neuropeptide substance K (neurokinin A). It is associated with G proteins that activate a phosphatidylinositol-calcium second messenger system. The rank order of affinity of this receptor to tachykinins is: substance K &gt; neuromedin-K &gt; substance P. The protein is Substance-K receptor (Tacr2) of Rattus norvegicus (Rat).